The sequence spans 521 residues: Riboflavin transporter MCH5 (521 aa).

Disordered stretches follow at residues 1–33 and 65–96; these read MSSD…SIHY and NKGT…NEEI. The Cytoplasmic portion of the chain corresponds to 1-103; it reads MSSDSLTPKD…EEIESFPEGG (103 aa). The chain crosses the membrane as a helical span at residues 104–124; that stretch reads FKAWVVTFGCFLGLIACFGLL. The N-linked (GlcNAc...) asparagine glycan is linked to Asn125. Residues 125–143 are Extracellular-facing; it reads NSTGVIESHLQDNQLSSES. A helical transmembrane segment spans residues 144–164; it reads VSTIGWLFSLFLFVCSASCII. At 165-172 the chain is on the cytoplasmic side; sequence SGTYFDRN. A helical transmembrane segment spans residues 173-193; it reads GFRTIMIVGTVFHVAGLFATA. A glycan (N-linked (GlcNAc...) asparagine) is linked at Asn194. Over 194-200 the chain is Extracellular; sequence NSTKYWH. Residues 201–221 form a helical membrane-spanning segment; that stretch reads FILSFAIVCGFGNGIVLSPLV. At 222–233 the chain is on the cytoplasmic side; that stretch reads SVPAHYFFKRRG. A helical membrane pass occupies residues 234-254; it reads TALAMATIGGSVGGVVFPIML. At 255–269 the chain is on the extracellular side; the sequence is RSFFSMKSDTDPTYG. The helical transmembrane segment at 270 to 290 threads the bilayer; it reads FVWGIRTLGFLDLALLTLSII. The Cytoplasmic portion of the chain corresponds to 291 to 325; the sequence is LVKERLPHVIENSKDGESRWRYILRVYILQCFDAK. The helical transmembrane segment at 326–346 threads the bilayer; that stretch reads AFLDMKYLFCVLGTVFSELSI. Residues 347 to 367 lie on the Extracellular side of the membrane; that stretch reads NSALTYYGSYATSHGISANDA. The helical transmembrane segment at 368–388 threads the bilayer; that stretch reads YTLIMIINVCGIPGRWVPGYL. The Cytoplasmic segment spans residues 389-396; it reads SDKFGRFN. Residues 397 to 417 traverse the membrane as a helical segment; sequence VAIATLLTLFIVMFVGWLPFG. At 418-422 the chain is on the extracellular side; that stretch reads TNLTN. The N-linked (GlcNAc...) asparagine glycan is linked to Asn419. The helical transmembrane segment at 423–443 threads the bilayer; the sequence is MYVISALYGFCSGSVFSLLPV. The Cytoplasmic portion of the chain corresponds to 444-461; sequence CCGQISKTEEFGKRYSTM. A helical transmembrane segment spans residues 462–482; that stretch reads YFVVGFGTLVGIPITGAIISI. Residues 483–487 lie on the Extracellular side of the membrane; sequence KTTAD. Residues 488 to 508 form a helical membrane-spanning segment; sequence YQHYIIFCGLATFVSAVCYII. At 509–521 the chain is on the cytoplasmic side; the sequence is SRAYCVGFKWVRF.

This sequence belongs to the major facilitator superfamily. Monocarboxylate porter (TC 2.A.1.13) family.

It localises to the cell membrane. Functionally, riboflavin transporter involved in riboflavin (vitamin B2) uptake. Does not act in the transport of monocarboxylic acids across the plasma membrane. In Saccharomyces cerevisiae (strain ATCC 204508 / S288c) (Baker's yeast), this protein is Riboflavin transporter MCH5 (MCH5).